The following is a 717-amino-acid chain: Probable inactive histone-lysine N-methyltransferase SUVR2 (717 aa).

The segment covering 61–73 has biased composition (basic and acidic residues); the sequence is QAIQESEEKKADE. The disordered stretch occupies residues 61 to 136; that stretch reads QAIQESEEKK…LGSPTLEGPS (76 aa). Low complexity predominate over residues 120-130; the sequence is SALASPSLGSP. C445, C446, C449, C453, C462, C529, C533, C535, and C539 together coordinate Zn(2+). The Pre-SET domain occupies 458–547; sequence MACRCATAFN…NCGNRVVQQG (90 aa). The region spanning 550 to 679 is the SET domain; that stretch reads NKLQVFFTPN…AMEELTWDYG (130 aa). S-adenosyl-L-methionine contacts are provided by residues 561-563 and 635-636; these read RGW and NH. A Zn(2+)-binding site is contributed by C638. Residue Y678 coordinates S-adenosyl-L-methionine. Residues 690–706 enclose the Post-SET domain; the sequence is SPFHCQCGSDFCRVRKQ. Residues C694, C696, and C701 each coordinate Zn(2+).

The protein belongs to the class V-like SAM-binding methyltransferase superfamily. Histone-lysine methyltransferase family. In terms of assembly, interacts with SUVR1, CHR19, CHR28 and itself. Interacts with CHR27.

The protein resides in the nucleus. Its subcellular location is the chromosome. Functionally, probable inactive histone-lysine methyltransferase that acts as regulator of transctiptional gene silencing independently of histone H3K9 methylation. Contributes to transcriptional gene silencing at RNA-directed DNA methylation (RdDM) target loci but also at RdDM-independent target loci. Forms a complex with SUVR1 and associates with the SNF2-related chromatin-remodeling proteins CHR19, CHR27, and CHR28, thereby mediating nucleosome positioning and transcriptional silencing. Does not possess histone-lysine methyltransferase activity in vitro, and the conserved catalytic sites of SUVR2 are dispensable for its function in transcriptional gene silencing. The polypeptide is Probable inactive histone-lysine N-methyltransferase SUVR2 (SUVR2) (Arabidopsis thaliana (Mouse-ear cress)).